Reading from the N-terminus, the 743-residue chain is UvrABC system protein C (743 aa).

The GIY-YIG domain occupies 16 to 95; that stretch reads VDPGVYKFRD…IKEFDPRFNV (80 aa). In terms of domain architecture, UVR spans 208–243; that stretch reads DKLVRQLEARMQQASEELDFETAARLRDDVGALRRA. 2 disordered regions span residues 497-543 and 694-743; these read AEAA…QTGR and PSAD…TGVE. Positions 506-520 are enriched in acidic residues; the sequence is QASDTDGDQVSDTDG. A compositionally biased stretch (polar residues) spans 734-743; the sequence is QSASQRTGVE.

The protein belongs to the UvrC family. Interacts with UvrB in an incision complex.

The protein resides in the cytoplasm. Its function is as follows. The UvrABC repair system catalyzes the recognition and processing of DNA lesions. UvrC both incises the 5' and 3' sides of the lesion. The N-terminal half is responsible for the 3' incision and the C-terminal half is responsible for the 5' incision. This Rhodococcus opacus (strain B4) protein is UvrABC system protein C.